A 64-amino-acid polypeptide reads, in one-letter code: SPbeta prophage-derived uncharacterized protein YonP (64 aa).

The polypeptide is SPbeta prophage-derived uncharacterized protein YonP (yonP) (Bacillus subtilis (strain 168)).